The sequence spans 121 residues: MASAAKGKILAVIGDEDTVVGFLLGGVGELNKARKPNYLIVDKQTTVQEIEEAFNGFCARDDIAIILINQHIAEMIRYAVDNHTQSIPAVLEIPSKEAPYDPSKDSILNRARGLFNPEDFR.

It belongs to the V-ATPase F subunit family. As to quaternary structure, V-ATPase is a heteromultimeric enzyme made up of two complexes: the ATP-hydrolytic V1 complex and the proton translocation V0 complex. The V1 complex consists of three catalytic AB heterodimers that form a heterohexamer, three peripheral stalks each consisting of EG heterodimers, one central rotor including subunits D and F, and the regulatory subunits C and H. The proton translocation complex V0 consists of the proton transport subunit a, a ring of proteolipid subunits c9c'', rotary subunit d, subunits e and f, and the accessory subunits vah-19/Ac45 and vah-20/PRR.

Subunit of the V1 complex of vacuolar(H+)-ATPase (V-ATPase), a multisubunit enzyme composed of a peripheral complex (V1) that hydrolyzes ATP and a membrane integral complex (V0) that translocates protons. V-ATPase is responsible for acidifying and maintaining the pH of intracellular compartments and in some cell types, is targeted to the plasma membrane, where it is responsible for acidifying the extracellular environment. Required along with other vacuolar ATPase components for the removal of protein aggregates which form in immature oocytes in the distal gonad. This removal occurs as the oocytes mature and move to the proximal gonad, is triggered by the introduction of sperm through mating and occurs before fertilization. The introduction of sperm triggers V-ATPase accumulation in proximal oocytes and induces lysosomal acidification which leads to engulfing of protein aggregates by lysosomes and subsequent clearance of the aggregates. Lysosomal acidification also leads to changes in mitochondrial morphology and function. Mitochondria in distal immature oocytes are fragmented, produce high levels of reactive oxygen species (ROS) and have high membrane potential, indicative of metabolic inactivity. In contrast, mitochondria in proximal mature oocytes are tubular with lower ROS levels and membrane potential, indicative of an active metabolic state required for aggregate mobilization before clearance. The chain is Probable V-type proton ATPase subunit F from Caenorhabditis elegans.